The chain runs to 995 residues: DNA polymerase (995 aa).

Belongs to the DNA polymerase type-B family.

The catalysed reaction is DNA(n) + a 2'-deoxyribonucleoside 5'-triphosphate = DNA(n+1) + diphosphate. This is DNA polymerase (RF1) from Kluyveromyces lactis (strain ATCC 8585 / CBS 2359 / DSM 70799 / NBRC 1267 / NRRL Y-1140 / WM37) (Yeast).